The following is a 360-amino-acid chain: Peptide chain release factor 1 (360 aa).

Gln234 bears the N5-methylglutamine mark. The tract at residues 285 to 305 is disordered; the sequence is RAQGIAEDRKSQVGTGDRSER.

The protein belongs to the prokaryotic/mitochondrial release factor family. Methylated by PrmC. Methylation increases the termination efficiency of RF1.

Its subcellular location is the cytoplasm. Functionally, peptide chain release factor 1 directs the termination of translation in response to the peptide chain termination codons UAG and UAA. The protein is Peptide chain release factor 1 of Clostridium beijerinckii (strain ATCC 51743 / NCIMB 8052) (Clostridium acetobutylicum).